The sequence spans 81 residues: CLAVATA3/ESR (CLE)-related protein 6 (81 aa).

An N-terminal signal peptide occupies residues 1-26 (MANLILKQSLIILLIIYSTPILSSQA). Residues proline 73 and proline 76 each carry the hydroxyproline modification. Proline 76 carries an O-linked (Ara...) hydroxyproline glycan.

It belongs to the CLV3/ESR signal peptide family. In terms of processing, the O-glycosylation (arabinosylation) of the hydroxyproline Pro-76 enhances binding affinity of the CLE6p peptide for its receptor. As to expression, mostly expressed in roots, seedlings, stems and flowers, and, to a lower extent, in apex and siliques.

Its subcellular location is the secreted. The protein localises to the extracellular space. In terms of biological role, extracellular signal peptide that regulates cell fate. The sequence is that of CLAVATA3/ESR (CLE)-related protein 6 from Arabidopsis thaliana (Mouse-ear cress).